A 267-amino-acid polypeptide reads, in one-letter code: Outer membrane protein assembly factor BamD (267 aa).

A signal peptide spans 1-16 (MKKILLTVSLGLALSA). The N-palmitoyl cysteine moiety is linked to residue C17. C17 is lipidated: S-diacylglycerol cysteine.

Belongs to the BamD family. In terms of assembly, part of the Bam complex.

The protein localises to the cell outer membrane. Part of the outer membrane protein assembly complex, which is involved in assembly and insertion of beta-barrel proteins into the outer membrane. Required for efficient transformation of Neisseria meningitidis by species-related DNA. This is Outer membrane protein assembly factor BamD from Neisseria meningitidis serogroup B (strain ATCC BAA-335 / MC58).